A 360-amino-acid polypeptide reads, in one-letter code: Peptide chain release factor 1 (360 aa).

At Gln235 the chain carries N5-methylglutamine.

Belongs to the prokaryotic/mitochondrial release factor family. In terms of processing, methylated by PrmC. Methylation increases the termination efficiency of RF1.

The protein localises to the cytoplasm. In terms of biological role, peptide chain release factor 1 directs the termination of translation in response to the peptide chain termination codons UAG and UAA. The protein is Peptide chain release factor 1 of Burkholderia mallei (strain NCTC 10247).